Consider the following 317-residue polypeptide: Glutathione synthetase (317 aa).

An ATP-grasp domain is found at 124 to 310 (EKLFTAWFPE…ITGKLMDAIE (187 aa)). ATP is bound at residue 150-207 (FRQEHGDIILKPLDGMGGASIFRVKENDPNVSVIIETLTNHGQNYAMAQTFVPDISNG). Residues E281 and N283 each contribute to the Mg(2+) site.

Belongs to the prokaryotic GSH synthase family. It depends on Mg(2+) as a cofactor. Mn(2+) is required as a cofactor.

The enzyme catalyses gamma-L-glutamyl-L-cysteine + glycine + ATP = glutathione + ADP + phosphate + H(+). The protein operates within sulfur metabolism; glutathione biosynthesis; glutathione from L-cysteine and L-glutamate: step 2/2. This chain is Glutathione synthetase, found in Vibrio vulnificus (strain CMCP6).